Consider the following 338-residue polypeptide: Lipoate-protein ligase A (338 aa).

In terms of domain architecture, BPL/LPL catalytic spans P29 to V216. Residues R71, G76 to F79, and K134 contribute to the ATP site. K134 lines the (R)-lipoate pocket.

This sequence belongs to the LplA family. Monomer.

The protein localises to the cytoplasm. It carries out the reaction L-lysyl-[lipoyl-carrier protein] + (R)-lipoate + ATP = N(6)-[(R)-lipoyl]-L-lysyl-[lipoyl-carrier protein] + AMP + diphosphate + H(+). It participates in protein modification; protein lipoylation via exogenous pathway; protein N(6)-(lipoyl)lysine from lipoate: step 1/2. Its pathway is protein modification; protein lipoylation via exogenous pathway; protein N(6)-(lipoyl)lysine from lipoate: step 2/2. Its function is as follows. Catalyzes both the ATP-dependent activation of exogenously supplied lipoate to lipoyl-AMP and the transfer of the activated lipoyl onto the lipoyl domains of lipoate-dependent enzymes. This chain is Lipoate-protein ligase A, found in Salmonella typhimurium (strain LT2 / SGSC1412 / ATCC 700720).